The following is a 246-amino-acid chain: Probable transcriptional regulatory protein YebC (246 aa).

The tract at residues 1–20 (MAGHSKWANTRHRKAAQDAK) is disordered.

This sequence belongs to the TACO1 family.

It is found in the cytoplasm. This chain is Probable transcriptional regulatory protein YebC, found in Salmonella choleraesuis (strain SC-B67).